The sequence spans 202 residues: Large ribosomal subunit protein uL18 (202 aa).

This sequence belongs to the universal ribosomal protein uL18 family. As to quaternary structure, part of the 50S ribosomal subunit. Contacts the 5S and 23S rRNAs.

Functionally, this is one of the proteins that bind and probably mediate the attachment of the 5S RNA into the large ribosomal subunit, where it forms part of the central protuberance. This Staphylothermus marinus (strain ATCC 43588 / DSM 3639 / JCM 9404 / F1) protein is Large ribosomal subunit protein uL18.